The primary structure comprises 213 residues: General transcription factor 3C polypeptide 6 (213 aa).

A compositionally biased stretch (basic and acidic residues) spans 1–11; the sequence is MAAAADERSPE. Disordered regions lie at residues 1 to 20 and 191 to 213; these read MAAA…EEEE and SGPL…QMLP. A2 bears the N-acetylalanine mark. At S9 the chain carries Phosphoserine.

This sequence belongs to the TFIIIC subunit 6 family. Part of the TFIIIC subcomplex TFIIIC2, consisting of six subunits, GTF3C1, GTF3C2, GTF3C3, GTF3C4, GTF3C5 and GTF3C6. Interacts with GTF3C4 and GTF3C5.

Its subcellular location is the nucleus. Involved in RNA polymerase III-mediated transcription. Integral, tightly associated component of the DNA-binding TFIIIC2 subcomplex that directly binds tRNA and virus-associated RNA promoters. This is General transcription factor 3C polypeptide 6 (GTF3C6) from Homo sapiens (Human).